Reading from the N-terminus, the 321-residue chain is MSTDQSYAKLKLFALNSNLPLAEKIAQRVGIPLGKSSVKRFSDGEIQINIEESIRGAEVFVIQSISEPVNDTILELLIMIDALRRASASQINVVIPYYGYSRQDRKARSREPITAKLIATLLEKDRASRVLTVDLHAAQIQGFFDIPVDHLFAAPLLASYFKDRGITDNLVVVSPDHAGVSRARKMAELLGAPIAIIDNRHPDDDDLVPSSIIGDVKGRVAIVIDDMIDTGTRFDVSADALAQAGAATVYGCATHAIFSQDAVAKLQASKFEKVIVTDTIQIPADKHFDKLVQLSVGPLLGDAIKLVHEQQPVDRLFDPRI.

ATP is bound by residues 43-45 and 102-103; these read DGE and RQ. Positions 136 and 176 each coordinate Mg(2+). D225 lines the D-ribose 5-phosphate pocket.

This sequence belongs to the ribose-phosphate pyrophosphokinase family. Class I subfamily. In terms of assembly, homohexamer. It depends on Mg(2+) as a cofactor.

It localises to the cytoplasm. It catalyses the reaction D-ribose 5-phosphate + ATP = 5-phospho-alpha-D-ribose 1-diphosphate + AMP + H(+). The protein operates within metabolic intermediate biosynthesis; 5-phospho-alpha-D-ribose 1-diphosphate biosynthesis; 5-phospho-alpha-D-ribose 1-diphosphate from D-ribose 5-phosphate (route I): step 1/1. In terms of biological role, involved in the biosynthesis of the central metabolite phospho-alpha-D-ribosyl-1-pyrophosphate (PRPP) via the transfer of pyrophosphoryl group from ATP to 1-hydroxyl of ribose-5-phosphate (Rib-5-P). The chain is Putative ribose-phosphate pyrophosphokinase 2 from Lactiplantibacillus plantarum (strain ATCC BAA-793 / NCIMB 8826 / WCFS1) (Lactobacillus plantarum).